The following is a 570-amino-acid chain: Sulfite reductase [NADPH] hemoprotein beta-component (570 aa).

[4Fe-4S] cluster contacts are provided by Cys434, Cys440, Cys479, and Cys483. Cys483 provides a ligand contact to siroheme.

It belongs to the nitrite and sulfite reductase 4Fe-4S domain family. Alpha(8)-beta(8). The alpha component is a flavoprotein, the beta component is a hemoprotein. It depends on siroheme as a cofactor. [4Fe-4S] cluster is required as a cofactor.

The catalysed reaction is hydrogen sulfide + 3 NADP(+) + 3 H2O = sulfite + 3 NADPH + 4 H(+). It participates in sulfur metabolism; hydrogen sulfide biosynthesis; hydrogen sulfide from sulfite (NADPH route): step 1/1. In terms of biological role, component of the sulfite reductase complex that catalyzes the 6-electron reduction of sulfite to sulfide. This is one of several activities required for the biosynthesis of L-cysteine from sulfate. This chain is Sulfite reductase [NADPH] hemoprotein beta-component, found in Salmonella heidelberg (strain SL476).